A 26-amino-acid polypeptide reads, in one-letter code: uncharacterized protein (26 aa).

This is an uncharacterized protein from Saccharomyces cerevisiae (strain ATCC 204508 / S288c) (Baker's yeast).